Consider the following 905-residue polypeptide: Coatomer subunit beta' (905 aa).

WD repeat units follow at residues 13–52, 55–94, 97–136, 140–180, 183–224, 227–266, 350–388, and 390–425; these read ARSD…LVKT, VCDL…RVHM, AHSD…SCSQ, GHTH…PNFT, GHEK…CVQT, GHAQ…LEST, SCEI…NKSF, and SAQE…KSFK. Lysine 627 is subject to N6-acetyllysine. The stretch at 746–783 is one WD 9 repeat; it reads IRTGRLPEAAFLARTYLPSQVSRVVKLWRENLSKVNQK. The tract at residues 837–873 is disordered; it reads EEAKGFQPSRPTAQQEPDGKPASSPVIMASQTTHKEE. Position 859 is a phosphoserine (serine 859). A coiled-coil region spans residues 867 to 891; sequence QTTHKEEKSLLELEVDLDNLELEDI.

This sequence belongs to the WD repeat COPB2 family. In terms of assembly, oligomeric complex that consists of at least the alpha, beta, beta', gamma, delta, epsilon and zeta subunits. Probably interacts with PEX11A. Interacts with SCYL1. Interacts with JAGN1.

Its subcellular location is the cytoplasm. The protein resides in the cytosol. The protein localises to the golgi apparatus membrane. It localises to the cytoplasmic vesicle. It is found in the COPI-coated vesicle membrane. Functionally, the coatomer is a cytosolic protein complex that binds to dilysine motifs and reversibly associates with Golgi non-clathrin-coated vesicles, which further mediate biosynthetic protein transport from the ER, via the Golgi up to the trans Golgi network. Coatomer complex is required for budding from Golgi membranes, and is essential for the retrograde Golgi-to-ER transport of dilysine-tagged proteins. In mammals, the coatomer can only be recruited by membranes associated to ADP-ribosylation factors (ARFs), which are small GTP-binding proteins; the complex also influences the Golgi structural integrity, as well as the processing, activity, and endocytic recycling of LDL receptors. Its function is as follows. This coatomer complex protein, essential for Golgi budding and vesicular trafficking, is a selective binding protein (RACK) for protein kinase C, epsilon type. It binds to Golgi membranes in a GTP-dependent manner. This is Coatomer subunit beta' (Copb2) from Mus musculus (Mouse).